The sequence spans 360 residues: Luc7-like protein (360 aa).

Residues 143 to 206 (KEQNSKITEL…QEKNENKRMS (64 aa)) adopt a coiled-coil conformation. Residues 255-360 (LGRTDFYNAP…DDRRKRDRNY (106 aa)) are disordered. Positions 269 to 293 (DSYRDDRRSSSSSYHDIDGRRDHRY) are enriched in basic and acidic residues. The segment covering 312–321 (NNGRGSSRDN) has biased composition (low complexity). Basic and acidic residues predominate over residues 329-360 (RDYRNDHGKDYDRKRERDYYNDDDRRKRDRNY).

The protein belongs to the Luc7 family.

It localises to the nucleus. Functionally, may play a role in RNA splicing. The protein is Luc7-like protein (crop) of Dictyostelium discoideum (Social amoeba).